A 60-amino-acid polypeptide reads, in one-letter code: MKVEELIERINYLYKKSKEEGLTEEEKIEQAELREKYLKNIRSNFRAQLESIGGVSKKQS.

It belongs to the UPF0291 family.

The protein resides in the cytoplasm. This Clostridium tetani (strain Massachusetts / E88) protein is UPF0291 protein CTC_01690.1.